The chain runs to 102 residues: UPF0058 protein MTH_224 (102 aa).

The protein belongs to the UPF0058 family.

This Methanothermobacter thermautotrophicus (strain ATCC 29096 / DSM 1053 / JCM 10044 / NBRC 100330 / Delta H) (Methanobacterium thermoautotrophicum) protein is UPF0058 protein MTH_224.